Reading from the N-terminus, the 341-residue chain is Geranylgeranyl pyrophosphate synthase penG (341 aa).

Positions 68, 71, and 100 each coordinate isopentenyl diphosphate. Mg(2+)-binding residues include aspartate 107 and aspartate 111. Arginine 116 contacts dimethylallyl diphosphate. Arginine 117 is a binding site for isopentenyl diphosphate. Dimethylallyl diphosphate contacts are provided by lysine 194, threonine 195, and glutamine 228. Aspartate 231 is a Mg(2+) binding site. Dimethylallyl diphosphate contacts are provided by asparagine 235, lysine 245, and lysine 255.

This sequence belongs to the FPP/GGPP synthase family. The cofactor is Mg(2+).

It carries out the reaction isopentenyl diphosphate + dimethylallyl diphosphate = (2E)-geranyl diphosphate + diphosphate. It catalyses the reaction isopentenyl diphosphate + (2E)-geranyl diphosphate = (2E,6E)-farnesyl diphosphate + diphosphate. The enzyme catalyses isopentenyl diphosphate + (2E,6E)-farnesyl diphosphate = (2E,6E,10E)-geranylgeranyl diphosphate + diphosphate. Its pathway is secondary metabolite biosynthesis. In terms of biological role, geranylgeranyl pyrophosphate synthase; part of the gene cluster that mediates the biosynthesis of the indole diterpenes penitrems. The geranylgeranyl diphosphate (GGPP) synthase penG catalyzes the first step in penitrem biosynthesis via conversion of farnesyl pyrophosphate and isopentyl pyrophosphate into geranylgeranyl pyrophosphate (GGPP). Condensation of indole-3-glycerol phosphate with GGPP by the prenyl transferase penC then forms 3-geranylgeranylindole (3-GGI). Epoxidation by the FAD-dependent monooxygenase penM leads to a epoxidized-GGI that is substrate of the terpene cyclase penB for cyclization to yield paspaline. Paspaline is subsequently converted to 13-desoxypaxilline by the cytochrome P450 monooxygenase penP, the latter being then converted to paxilline by the cytochrome P450 monooxygenase penQ. Paxilline is converted to beta-paxitriol via C-10 ketoreduction by the short-chain dehydrogenase PC-15 which can be monoprenylated at the C-20 by the indole diterpene prenyltransferase penD. A two-step elimination (acetylation and elimination) process performed by the O-acetyltransferase PC-16 and the P.simplicissimum ptmI-ortholog not yet identified in P.crustosum, leads to the production of the prenylated form of penijanthine. The FAD-linked oxidoreductase ptmO then converts the prenylated form of penijanthine into PC-M5 which is in turn transformed into PC-M4 by the aromatic dimethylallyltransferase PC-22. A series of oxidation steps involving 4 cytochrome P450 monooxygenases (PC-21, PC-05, PC-23, PC-20) and a FAD-dependent monooxygenase (PC-14) are required for the transformation of PC-M4 to penitrems A and E. Synthesis of these final products is proposed to proceed via penitrems D and C (PC-21, PC-05, PC-14) and penitrems B and F (PC-21, PC-05, PC-14, PC-23). The protein is Geranylgeranyl pyrophosphate synthase penG of Penicillium crustosum (Blue mold fungus).